Consider the following 241-residue polypeptide: Small ribosomal subunit protein bS6 (241 aa).

Residues Lys97–Thr108 are compositionally biased toward basic residues. Disordered regions lie at residues Lys97 to Asn187 and Asn199 to Asn241. The span at Pro109–Asn118 shows a compositional bias: basic and acidic residues. 3 stretches are compositionally biased toward low complexity: residues Gln130–Gln151, Asp161–Gln180, and Asn199–Gln210.

It belongs to the bacterial ribosomal protein bS6 family.

Its function is as follows. Binds together with bS18 to 16S ribosomal RNA. The chain is Small ribosomal subunit protein bS6 from Mesomycoplasma hyopneumoniae (strain 7448) (Mycoplasma hyopneumoniae).